Here is a 135-residue protein sequence, read N- to C-terminus: uncharacterized protein (135 aa).

The region spanning 4–129 is the VOC domain; the sequence is SIVHIALVVN…YGNLWDLLQL (126 aa).

To B.subtilis YwkD.

This is an uncharacterized protein from Shewanella frigidimarina (strain NCIMB 400).